We begin with the raw amino-acid sequence, 137 residues long: NADH-quinone oxidoreductase subunit A 2 (137 aa).

A run of 3 helical transmembrane segments spans residues 12–32 (WGFA…LGVS), 66–86 (FYLV…LFAW), and 95–115 (WAGL…LVYL).

This sequence belongs to the complex I subunit 3 family. NDH-1 is composed of 13 different subunits. Subunits NuoA, H, J, K, L, M, N constitute the membrane sector of the complex.

The protein localises to the cell inner membrane. The enzyme catalyses a quinone + NADH + 5 H(+)(in) = a quinol + NAD(+) + 4 H(+)(out). Functionally, NDH-1 shuttles electrons from NADH, via FMN and iron-sulfur (Fe-S) centers, to quinones in the respiratory chain. The immediate electron acceptor for the enzyme in this species is believed to be ubiquinone. Couples the redox reaction to proton translocation (for every two electrons transferred, four hydrogen ions are translocated across the cytoplasmic membrane), and thus conserves the redox energy in a proton gradient. The chain is NADH-quinone oxidoreductase subunit A 2 from Pseudomonas aeruginosa (strain ATCC 15692 / DSM 22644 / CIP 104116 / JCM 14847 / LMG 12228 / 1C / PRS 101 / PAO1).